Reading from the N-terminus, the 455-residue chain is Carbamoyl phosphate synthase arginine-specific small chain (455 aa).

Residues 1 to 28 (MFARFCKAIPAKGRAFPSVNASIQSRLM) constitute a mitochondrion transit peptide. The Glutamine amidotransferase type-1 domain occupies 219–406 (HVAVIDCGVK…IDSVRKYKAN (188 aa)). Residue Cys-295 is the Nucleophile of the active site. Catalysis depends on residues His-379 and Glu-381.

Belongs to the CarA family. As to quaternary structure, heterodimer composed of 2 chains; the small (or glutamine) chain promotes the hydrolysis of glutamine to ammonia, which is used by the large (or ammonia) chain to synthesize carbamoyl phosphate.

The protein localises to the mitochondrion matrix. It catalyses the reaction hydrogencarbonate + L-glutamine + 2 ATP + H2O = carbamoyl phosphate + L-glutamate + 2 ADP + phosphate + 2 H(+). The enzyme catalyses L-glutamine + H2O = L-glutamate + NH4(+). It functions in the pathway amino-acid biosynthesis; L-arginine biosynthesis; carbamoyl phosphate from bicarbonate: step 1/1. Functionally, small subunit of the arginine-specific carbamoyl phosphate synthase (CPSase). CPSase catalyzes the formation of carbamoyl phosphate from the ammonia moiety of glutamine, carbonate, and phosphate donated by ATP, the first step of the arginine biosynthetic pathway. The small subunit (glutamine amidotransferase) binds and cleaves glutamine to supply the large subunit with the substrate ammonia. In Aspergillus clavatus (strain ATCC 1007 / CBS 513.65 / DSM 816 / NCTC 3887 / NRRL 1 / QM 1276 / 107), this protein is Carbamoyl phosphate synthase arginine-specific small chain (cpa1).